The sequence spans 338 residues: Anthranilate phosphoribosyltransferase (338 aa).

5-phospho-alpha-D-ribose 1-diphosphate is bound by residues glycine 81, 84–85, serine 89, 91–94, 109–117, and serine 121; these read GD, NIST, and KHGNRSVSS. Glycine 81 provides a ligand contact to anthranilate. Mg(2+) is bound at residue serine 93. Residue asparagine 112 coordinates anthranilate. Arginine 167 is an anthranilate binding site. Mg(2+) is bound by residues aspartate 226 and glutamate 227.

This sequence belongs to the anthranilate phosphoribosyltransferase family. As to quaternary structure, homodimer. It depends on Mg(2+) as a cofactor.

The enzyme catalyses N-(5-phospho-beta-D-ribosyl)anthranilate + diphosphate = 5-phospho-alpha-D-ribose 1-diphosphate + anthranilate. Its pathway is amino-acid biosynthesis; L-tryptophan biosynthesis; L-tryptophan from chorismate: step 2/5. Its function is as follows. Catalyzes the transfer of the phosphoribosyl group of 5-phosphorylribose-1-pyrophosphate (PRPP) to anthranilate to yield N-(5'-phosphoribosyl)-anthranilate (PRA). The polypeptide is Anthranilate phosphoribosyltransferase (Thioalkalivibrio sulfidiphilus (strain HL-EbGR7)).